A 319-amino-acid chain; its full sequence is Ornithine carbamoyltransferase (319 aa).

Residues 55–58, Gln82, Arg106, and 133–136 contribute to the carbamoyl phosphate site; these read STRT and HPCQ. Residues Asn171, Asp234, and 238–239 contribute to the L-ornithine site; that span reads SM. Carbamoyl phosphate-binding positions include 274–275 and Arg302; that span reads CL.

The protein belongs to the aspartate/ornithine carbamoyltransferase superfamily. OTCase family.

Its subcellular location is the cytoplasm. The enzyme catalyses carbamoyl phosphate + L-ornithine = L-citrulline + phosphate + H(+). It functions in the pathway amino-acid biosynthesis; L-arginine biosynthesis; L-arginine from L-ornithine and carbamoyl phosphate: step 1/3. Its function is as follows. Reversibly catalyzes the transfer of the carbamoyl group from carbamoyl phosphate (CP) to the N(epsilon) atom of ornithine (ORN) to produce L-citrulline. The protein is Ornithine carbamoyltransferase of Corynebacterium diphtheriae (strain ATCC 700971 / NCTC 13129 / Biotype gravis).